The chain runs to 647 residues: Threonine--tRNA ligase (647 aa).

The TGS domain occupies 1-61; sequence MINITFPDGA…TEDGSIEIVT (61 aa). Positions 242-540 are catalytic; it reads DHRKLGKELD…LIENYKGAFP (299 aa). Zn(2+)-binding residues include cysteine 336, histidine 387, and histidine 517.

This sequence belongs to the class-II aminoacyl-tRNA synthetase family. Homodimer. Requires Zn(2+) as cofactor.

It is found in the cytoplasm. It catalyses the reaction tRNA(Thr) + L-threonine + ATP = L-threonyl-tRNA(Thr) + AMP + diphosphate + H(+). In terms of biological role, catalyzes the attachment of threonine to tRNA(Thr) in a two-step reaction: L-threonine is first activated by ATP to form Thr-AMP and then transferred to the acceptor end of tRNA(Thr). Also edits incorrectly charged L-seryl-tRNA(Thr). The sequence is that of Threonine--tRNA ligase from Streptococcus pneumoniae (strain JJA).